The chain runs to 416 residues: S-adenosylmethionine synthase (416 aa).

His14 provides a ligand contact to ATP. Mg(2+) is bound at residue Asp16. Glu42 provides a ligand contact to K(+). L-methionine-binding residues include Glu55 and Gln98. A flexible loop region spans residues 98 to 108 (QSADINQGVDR). ATP-binding positions include 164 to 166 (DAK), 240 to 241 (KF), Asp249, 255 to 256 (RK), Ala272, and Lys276. Residue Asp249 participates in L-methionine binding. Residue Lys280 coordinates L-methionine.

It belongs to the AdoMet synthase family. In terms of assembly, homotetramer; dimer of dimers. It depends on Mg(2+) as a cofactor. K(+) is required as a cofactor.

It localises to the cytoplasm. It catalyses the reaction L-methionine + ATP + H2O = S-adenosyl-L-methionine + phosphate + diphosphate. The protein operates within amino-acid biosynthesis; S-adenosyl-L-methionine biosynthesis; S-adenosyl-L-methionine from L-methionine: step 1/1. Functionally, catalyzes the formation of S-adenosylmethionine (AdoMet) from methionine and ATP. The overall synthetic reaction is composed of two sequential steps, AdoMet formation and the subsequent tripolyphosphate hydrolysis which occurs prior to release of AdoMet from the enzyme. This Flavobacterium psychrophilum (strain ATCC 49511 / DSM 21280 / CIP 103535 / JIP02/86) protein is S-adenosylmethionine synthase.